Here is a 282-residue protein sequence, read N- to C-terminus: Small ribosomal subunit protein uS2 (282 aa).

The tract at residues 260–282 is disordered; the sequence is KRRRSKVYKEEEREVVTNEDESR. The span at 266–282 shows a compositional bias: basic and acidic residues; that stretch reads VYKEEEREVVTNEDESR.

This sequence belongs to the universal ribosomal protein uS2 family.

The sequence is that of Small ribosomal subunit protein uS2 from Wolbachia pipientis wMel.